Consider the following 463-residue polypeptide: Adenosylhomocysteinase (463 aa).

Substrate-binding residues include T54, D128, and E189. 190-192 (TTT) serves as a coordination point for NAD(+). Residues K219 and D223 each coordinate substrate. Residues N224, 253-258 (GYGDVG), E276, N311, 332-334 (IGH), and N377 contribute to the NAD(+) site.

It belongs to the adenosylhomocysteinase family. In terms of assembly, homotetramer. It depends on NAD(+) as a cofactor.

Its subcellular location is the cytoplasm. The enzyme catalyses S-adenosyl-L-homocysteine + H2O = L-homocysteine + adenosine. It participates in amino-acid biosynthesis; L-homocysteine biosynthesis; L-homocysteine from S-adenosyl-L-homocysteine: step 1/1. Functionally, may play a key role in the regulation of the intracellular concentration of adenosylhomocysteine. The protein is Adenosylhomocysteinase of Rhodobacter capsulatus (strain ATCC BAA-309 / NBRC 16581 / SB1003).